Reading from the N-terminus, the 197-residue chain is MKFVVFASLLASAARFAPAQQSARTSVATNMAFENELGAQPPLGFFDPLGLVADGDQEKFDRLRYVEIKHGRISMLAVAGYLVQENGIRLPGDIDYSGTSFESIPNGFAALTTISGAGIAQIVAFIGFLELAVMKDITGGEFVGDFRNDFIDFGWDSFDEETKMQKRAIELNQGRAAQMGILALMVHEQLGVSLIPN.

The N-terminal 31 residues, 1–31 (MKFVVFASLLASAARFAPAQQSARTSVATNM), are a transit peptide targeting the chloroplast. The next 3 membrane-spanning stretches (helical) occupy residues 73–94 (ISML…PGDI), 114–134 (ISGA…LAVM), and 174–196 (GRAA…SLIP).

This sequence belongs to the fucoxanthin chlorophyll protein family. As to quaternary structure, the LHC complex of chromophytic algae is composed of fucoxanthin, chlorophyll A and C bound non-covalently by fucoxanthin chlorophyll proteins (FCPs). The ratio of the pigments in LHC; fucoxanthin: chlorophyll C: chlorophyll A; (0.6-1): (0.1-0.3): (1).

The protein localises to the plastid. It localises to the chloroplast thylakoid membrane. In terms of biological role, the light-harvesting complex (LHC) functions as a light receptor, it captures and delivers excitation energy to photosystems with which it is closely associated. Energy is transferred from the carotenoid and chlorophyll C (or B) to chlorophyll A and the photosynthetic reaction centers where it is used to synthesize ATP and reducing power. This is Fucoxanthin-chlorophyll a-c binding protein E, chloroplastic (FCPE) from Phaeodactylum tricornutum (Diatom).